The chain runs to 913 residues: Probable TonB-dependent receptor HI_1217 (913 aa).

The N-terminal stretch at 1 to 27 (MKKAIKLNLITLGLINTIGMTITQAQA) is a signal peptide. A TBDR plug domain is found at 42–165 (SNDKKPFTEA…LAGSANFRTL (124 aa)). In terms of domain architecture, TBDR beta-barrel spans 176-913 (PFGIILKGMT…TYILSLNYKF (738 aa)). Positions 896-913 (LYNFARGRTYILSLNYKF) match the TonB C-terminal box motif.

The protein belongs to the TonB-dependent receptor family.

It localises to the cell outer membrane. Probable receptor, TonB-dependent. The protein is Probable TonB-dependent receptor HI_1217 of Haemophilus influenzae (strain ATCC 51907 / DSM 11121 / KW20 / Rd).